A 1040-amino-acid chain; its full sequence is Multidrug resistance protein MdtB (1040 aa).

The next 12 membrane-spanning stretches (helical) occupy residues 16–36, 347–367, 369–389, 396–416, 440–460, 472–492, 537–557, 863–883, 888–908, 911–931, 968–988, and 998–1018; these read FIMRPVATTLLMVAILLAGII, LMMAIALVVMIIYLFLRNIPA, IIPGVAVPLSLIGTFAVMVFL, LTLMALTIATGFVVDDAIVVI, IGFTIISLTFSLIAVLIPLLF, FAITLAVAILISAVVSLTLTP, WLTLSVALSTLLLSVLLWVFI, LGSTVWLIVAAVVAMYIVLGI, FIHPITILSTLPTAGVGALLA, IAGSELDVIAIIGIILLIGIV, ILMTTLAALLGALPLMLSTGV, and IGMVGGLIVSQVLTLFTTPVI.

Belongs to the resistance-nodulation-cell division (RND) (TC 2.A.6) family. MdtB subfamily. Part of a tripartite efflux system composed of MdtA, MdtB and MdtC. MdtB forms a heteromultimer with MdtC.

Its subcellular location is the cell inner membrane. The sequence is that of Multidrug resistance protein MdtB from Shigella sonnei (strain Ss046).